A 201-amino-acid chain; its full sequence is Proteasome subunit beta 1 (201 aa).

Residue methionine 1 is a propeptide, removed in mature form; by autocatalysis. Catalysis depends on threonine 2, which acts as the Nucleophile.

This sequence belongs to the peptidase T1B family. In terms of assembly, the 20S proteasome core is composed of 14 alpha and 14 beta subunits that assemble into four stacked heptameric rings, resulting in a barrel-shaped structure. The two inner rings, each composed of seven catalytic beta subunits, are sandwiched by two outer rings, each composed of seven alpha subunits. The catalytic chamber with the active sites is on the inside of the barrel. Has a gated structure, the ends of the cylinder being occluded by the N-termini of the alpha-subunits. Is capped at one or both ends by the proteasome regulatory ATPase, PAN.

The protein localises to the cytoplasm. It catalyses the reaction Cleavage of peptide bonds with very broad specificity.. The formation of the proteasomal ATPase PAN-20S proteasome complex, via the docking of the C-termini of PAN into the intersubunit pockets in the alpha-rings, triggers opening of the gate for substrate entry. Interconversion between the open-gate and close-gate conformations leads to a dynamic regulation of the 20S proteasome proteolysis activity. Component of the proteasome core, a large protease complex with broad specificity involved in protein degradation. This chain is Proteasome subunit beta 1, found in Pyrobaculum calidifontis (strain DSM 21063 / JCM 11548 / VA1).